We begin with the raw amino-acid sequence, 157 residues long: MNTIVVAQLQRQFQDYIVSLYQQGFLDNQFSELRKLQDEGTPDFVAEVVSLFFDDCSKLINTMSISLERPDNVDFKQVDSGVHQLKGSSSSVGARRVKNVCISFKECCDVQNREGCLRCLQQVDYEYKMLKTKLQDLFNLEKQILQAGGTIPQVDIN.

Met-1 is subject to N-acetylmethionine. The 108-residue stretch at 41-148 (TPDFVAEVVS…NLEKQILQAG (108 aa)) folds into the HPt domain. His-83 carries the phosphohistidine modification.

As to quaternary structure, interacts with the B-type response regulators ARR1 and ARR2. Binds to AHK2, AHK3, AHK4 and AHK5. In terms of processing, two-component system major event consists of a His-to-Asp phosphorelay between a sensor histidine kinase (HK) and a response regulator (RR). In plants, the His-to-Asp phosphorelay involves an additional intermediate named Histidine-containing phosphotransfer protein (HPt). This multistep phosphorelay consists of a His-Asp-His-Asp sequential transfer of a phosphate group between first a His and an Asp of the HK protein, followed by the transfer to a conserved His of the HPt protein and finally the transfer to an Asp in the receiver domain of the RR protein. In terms of tissue distribution, expressed in the whole plant.

The protein localises to the cytoplasm. Its subcellular location is the cytosol. The protein resides in the nucleus. Its function is as follows. Functions as a two-component phosphorelay mediator between cytokinin sensor histidine kinases and response regulators (B-type ARRs). Plays an important role in propagating cytokinin signal transduction through the multistep His-to-Asp phosphorelay. The sequence is that of Histidine-containing phosphotransfer protein 5 (AHP5) from Arabidopsis thaliana (Mouse-ear cress).